The chain runs to 207 residues: Small ribosomal subunit protein eS1 (207 aa).

Belongs to the eukaryotic ribosomal protein eS1 family.

This chain is Small ribosomal subunit protein eS1, found in Methanosarcina barkeri (strain Fusaro / DSM 804).